The sequence spans 160 residues: MNTDIKNLIWIDLEMTGLNPNIHKIIEIATLITDKNLKILSYGPVIAIYQNNHQLSFMDPWNNKMHTKNGLITRIKNSLYTEHLAEIKTITFLKKWVPKNTSPMCGNSISTDRQFLFKYMPTLEKYFHYRQIDVSTIKELALRWKPKIYNKLKKKTLIKH.

An Exonuclease domain is found at 8–158 (LIWIDLEMTG…YNKLKKKTLI (151 aa)). Residue Y129 is part of the active site.

Belongs to the oligoribonuclease family.

The protein resides in the cytoplasm. Its function is as follows. 3'-to-5' exoribonuclease specific for small oligoribonucleotides. This is Oligoribonuclease (orn) from Buchnera aphidicola subsp. Baizongia pistaciae (strain Bp).